Here is a 228-residue protein sequence, read N- to C-terminus: Triosephosphate isomerase (228 aa).

9–11 (NFK) lines the substrate pocket. His-93 functions as the Electrophile in the catalytic mechanism. Catalysis depends on Glu-141, which acts as the Proton acceptor. Residues Ile-146, Gly-180, and 201–202 (AS) each bind substrate.

Belongs to the triosephosphate isomerase family. As to quaternary structure, homotetramer; dimer of dimers.

Its subcellular location is the cytoplasm. It catalyses the reaction D-glyceraldehyde 3-phosphate = dihydroxyacetone phosphate. It functions in the pathway carbohydrate biosynthesis; gluconeogenesis. Its pathway is carbohydrate degradation; glycolysis; D-glyceraldehyde 3-phosphate from glycerone phosphate: step 1/1. Its function is as follows. Involved in the gluconeogenesis. Catalyzes stereospecifically the conversion of dihydroxyacetone phosphate (DHAP) to D-glyceraldehyde-3-phosphate (G3P). This is Triosephosphate isomerase from Metallosphaera sedula (strain ATCC 51363 / DSM 5348 / JCM 9185 / NBRC 15509 / TH2).